The following is a 251-amino-acid chain: Alanyl-tRNA editing protein AlaX-M (251 aa).

Positions 107, 111, 210, and 214 each coordinate Zn(2+).

The protein belongs to the class-II aminoacyl-tRNA synthetase family. Editing domain AlaX-M subfamily. Zn(2+) is required as a cofactor.

The protein resides in the cytoplasm. Functionally, functions in trans to edit the amino acid moiety from mischarged Ser-tRNA(Ala). Recognition depends, at least in part, on the acceptor stem of tRNA(Ala). The chain is Alanyl-tRNA editing protein AlaX-M (alaXM) from Methanosarcina mazei (strain ATCC BAA-159 / DSM 3647 / Goe1 / Go1 / JCM 11833 / OCM 88) (Methanosarcina frisia).